Here is a 95-residue protein sequence, read N- to C-terminus: Large ribosomal subunit protein bL27 (95 aa).

The propeptide occupies 1-9 (MLKMNLQFF).

The protein belongs to the bacterial ribosomal protein bL27 family. In terms of processing, the N-terminus is cleaved by ribosomal processing cysteine protease Prp.

The sequence is that of Large ribosomal subunit protein bL27 from Lachnoclostridium phytofermentans (strain ATCC 700394 / DSM 18823 / ISDg) (Clostridium phytofermentans).